Reading from the N-terminus, the 733-residue chain is Protein psiM (733 aa).

The signal sequence occupies residues 1–26; it reads MKKINNNKIFVLFLTILLYLLNITTA. N-linked (GlcNAc...) asparagine glycans are attached at residues asparagine 22, asparagine 65, and asparagine 96. Over 27 to 672 the chain is Extracellular; sequence QKPVSINIKI…VCQKAALVST (646 aa). Residues 114–260 enclose the PA14 domain; that stretch reads NYDSDSGNYI…YDYCGVCNGD (147 aa). Residues asparagine 277, asparagine 336, asparagine 379, asparagine 428, asparagine 471, asparagine 537, asparagine 573, and asparagine 641 are each glycosylated (N-linked (GlcNAc...) asparagine). A helical transmembrane segment spans residues 673–693; sequence AVIASVVVVGAVVLGAAIFAG. Residues 694–733 lie on the Cytoplasmic side of the membrane; it reads KKGYDAWKTSQGNVMAASQANPLYTQSSNGGENPLYNSPT.

It belongs to the prespore-cell-inducing factor family.

It localises to the membrane. In Dictyostelium discoideum (Social amoeba), this protein is Protein psiM (psiM).